The chain runs to 415 residues: UDP-galactose transporter homolog 1 (415 aa).

The interval 1 to 39 (MHLVPEGSESMSTQQNGSAQKPVTLNGSASTKGQAPEAP) is disordered. A compositionally biased stretch (polar residues) spans 9–33 (ESMSTQQNGSAQKPVTLNGSASTKG). Asparagine 16 and asparagine 26 each carry an N-linked (GlcNAc...) asparagine glycan. 5 helical membrane passes run 45-65 (LIQLAICVLGIYASFLSWGVL), 95-115 (IVLNTIQSTFAAITGFLYLYF), 132-152 (ILFPLLLVSISSSLASPFGYA), 161-181 (TFILAKSCKLLPVMFLHLTIF), and 185-205 (YPLYKYGVVLLVTLGVATFTL). Asparagine 221 carries N-linked (GlcNAc...) asparagine glycosylation. The helical transmembrane segment at 223-243 (SGSSLYGIFLLSINLLLDGLT) threads the bilayer. Residue asparagine 244 is glycosylated (N-linked (GlcNAc...) asparagine). The next 3 membrane-spanning stretches (helical) occupy residues 281–301 (LLVMPHLSSTGALHALLPIPI), 325–345 (NVLGFAACGAIGQLFIFYTLS), and 368–388 (VFWFGHTLSAGQWLGIGLVFG).

Belongs to the nucleotide-sugar transporter family. SLC35B subfamily.

The protein localises to the endoplasmic reticulum membrane. May be involved in specific transport of UDP-Gal from the cytosol to the Golgi lumen. Involved in the maintenance of optimal conditions for the folding of secretory pathway proteins in the endoplasmic reticulum. The polypeptide is UDP-galactose transporter homolog 1 (hut1) (Aspergillus fumigatus (strain ATCC MYA-4609 / CBS 101355 / FGSC A1100 / Af293) (Neosartorya fumigata)).